The following is a 203-amino-acid chain: GTP cyclohydrolase-2 (203 aa).

49–53 (RIHSE) is a GTP binding site. The Zn(2+) site is built by cysteine 54, cysteine 65, and cysteine 67. GTP contacts are provided by residues glutamine 70, 92 to 94 (EGR), and threonine 114. Aspartate 126 acts as the Proton acceptor in catalysis. The Nucleophile role is filled by arginine 128. 2 residues coordinate GTP: threonine 149 and lysine 154.

This sequence belongs to the GTP cyclohydrolase II family. Requires Zn(2+) as cofactor.

The enzyme catalyses GTP + 4 H2O = 2,5-diamino-6-hydroxy-4-(5-phosphoribosylamino)-pyrimidine + formate + 2 phosphate + 3 H(+). It participates in cofactor biosynthesis; riboflavin biosynthesis; 5-amino-6-(D-ribitylamino)uracil from GTP: step 1/4. In terms of biological role, catalyzes the conversion of GTP to 2,5-diamino-6-ribosylamino-4(3H)-pyrimidinone 5'-phosphate (DARP), formate and pyrophosphate. This chain is GTP cyclohydrolase-2, found in Shewanella oneidensis (strain ATCC 700550 / JCM 31522 / CIP 106686 / LMG 19005 / NCIMB 14063 / MR-1).